Consider the following 355-residue polypeptide: Sulfate/thiosulfate import ATP-binding protein CysA (355 aa).

One can recognise an ABC transporter domain in the interval 3–233; the sequence is IIINNVSKQF…PASPFVMGFI (231 aa). 35 to 42 contacts ATP; sequence GPSGSGKS.

This sequence belongs to the ABC transporter superfamily. Sulfate/tungstate importer (TC 3.A.1.6) family. In terms of assembly, the complex is composed of two ATP-binding proteins (CysA), two transmembrane proteins (CysT and CysW) and a solute-binding protein (CysP).

The protein resides in the cell inner membrane. The enzyme catalyses sulfate(out) + ATP + H2O = sulfate(in) + ADP + phosphate + H(+). The catalysed reaction is thiosulfate(out) + ATP + H2O = thiosulfate(in) + ADP + phosphate + H(+). Functionally, part of the ABC transporter complex CysAWTP involved in sulfate/thiosulfate import. Responsible for energy coupling to the transport system. The protein is Sulfate/thiosulfate import ATP-binding protein CysA of Synechocystis sp. (strain ATCC 27184 / PCC 6803 / Kazusa).